We begin with the raw amino-acid sequence, 355 residues long: uncharacterized protein (355 aa).

The protein belongs to the 3-beta-HSD family.

This is an uncharacterized protein from Frog virus 3 (isolate Goorha) (FV-3).